Here is a 210-residue protein sequence, read N- to C-terminus: Scoloptoxin SSD552 (210 aa).

A signal peptide spans 1-23 (MNILLSSTLFVLLMFQIIGSGMG).

Post-translationally, contains 3 disulfide bonds. Expressed by the venom gland.

The protein resides in the secreted. The polypeptide is Scoloptoxin SSD552 (Scolopendra dehaani (Thai centipede)).